Consider the following 94-residue polypeptide: Defensin alpha 5 (94 aa).

A signal peptide spans 1–19 (MRTIAILAAILLVALQAQA). 3 cysteine pairs are disulfide-bonded: Cys-65/Cys-93, Cys-67/Cys-82, and Cys-72/Cys-92.

This sequence belongs to the alpha-defensin family. As to quaternary structure, homodimer. Homotetramer. Interacts with B.antracis lef/lethal factor. Post-translationally, glycosylated. Proteolytically cleaved at Arg-62 by trypsin. Both the propeptide form proHD5/HD5(20-94) and HD5(56-94) are cleaved into the lumenal peptide form HD5(63-94) by trypsin. Unprocessed proHD5 exerts antimicrobial activities, but peptide potency is enhanced by peptide processing. Proteolytically cleaved in duodenal fluid; derived fragments are antimicrobially active against commensal bacteria (in vitro). In terms of processing, (Microbial infection) The disulfide bridges and homodimerization are a prerequisite for the enhancement of S.flexneri adhesion and invasion. As to expression, expressed in the gastrointestinal, reproductive, and urinary tracts (at protein level). Expressed in Paneth cells of the small intestine (at protein level). Expressed throughout the urothelium of the lower urinary tract and in the collecting tubules of the kidney (at protein level). Expressed in stratified squamous epithelial cells of the female genital tract epithelia, such as in vagina, ectocervix, endocervix, endometrium, and fallopian tube (at protein level). Endometrial expression correlates with stages of the menstrual cycle: Expression is low during the early proliferative phase, increased during the mid- to late proliferative phase, peaks during the early secretory phase of the cycle, and decreases during the mid- to late secretory phase.

Its subcellular location is the secreted. The protein resides in the cytoplasmic vesicle. The protein localises to the secretory vesicle. Its function is as follows. Host-defense peptide that maintains sterility in the urogenital system. Has antimicrobial activity against a wide range of bacteria, including Gram-negative E.coli, P.aeruginosa and S.typhimurium, and Gram-positive E.aerogenes, S.aureus, B.cereus, E.faecium and L.monocytogenes. Confers resistance to intestinal infection by S.typhimurium. Exhibits antimicrobial activity against enteric commensal bacteria such as B.adolescentis, L.acidophilus, B.breve, L.fermentum, B.longum and S.thermophilus. Binds to bacterial membranes and causes membrane disintegration. Induces the secretion of the chemokine IL-8 by intestinal epithelial cells. Binds to B.antracis lef/lethal factor, a major virulence factor from B.anthracis, and neutralizes its enzymatic activity. In terms of biological role, (Microbial infection) Acts as a target for S.flexneri infection by binding to the bacterium, possibly via bacterial surface proteins, and thereby augmenting infectivity via enhanced bacterial adhesion and invasion of epithelial cells and tissues. The sequence is that of Defensin alpha 5 (DEFA5) from Homo sapiens (Human).